Reading from the N-terminus, the 334-residue chain is Ornithine carbamoyltransferase (334 aa).

Residues 57–60 (STRT), Q84, R108, and 135–138 (HPTQ) each bind carbamoyl phosphate. L-ornithine contacts are provided by residues N169, D233, and 237-238 (SM). Carbamoyl phosphate contacts are provided by residues 275–276 (CL) and R320.

Belongs to the aspartate/ornithine carbamoyltransferase superfamily. OTCase family.

The protein localises to the cytoplasm. It carries out the reaction carbamoyl phosphate + L-ornithine = L-citrulline + phosphate + H(+). It functions in the pathway amino-acid biosynthesis; L-arginine biosynthesis; L-arginine from L-ornithine and carbamoyl phosphate: step 1/3. Functionally, reversibly catalyzes the transfer of the carbamoyl group from carbamoyl phosphate (CP) to the N(epsilon) atom of ornithine (ORN) to produce L-citrulline. The protein is Ornithine carbamoyltransferase of Aliivibrio fischeri (strain ATCC 700601 / ES114) (Vibrio fischeri).